Reading from the N-terminus, the 144-residue chain is Large ribosomal subunit protein uL15 (144 aa).

Positions 20–49 (GRGIGSGLGKTGGRGHKGQKSRSGGFHKVG) are disordered. Positions 21-31 (RGIGSGLGKTG) are enriched in gly residues.

Belongs to the universal ribosomal protein uL15 family. Part of the 50S ribosomal subunit.

Binds to the 23S rRNA. This chain is Large ribosomal subunit protein uL15, found in Neisseria meningitidis serogroup A / serotype 4A (strain DSM 15465 / Z2491).